The sequence spans 591 residues: NADH-quinone oxidoreductase subunit C/D (591 aa).

The tract at residues Met1–Gln182 is NADH dehydrogenase I subunit C. Positions Asp206–Arg591 are NADH dehydrogenase I subunit D.

The protein in the N-terminal section; belongs to the complex I 30 kDa subunit family. This sequence in the C-terminal section; belongs to the complex I 49 kDa subunit family. In terms of assembly, NDH-1 is composed of 13 different subunits. Subunits NuoB, CD, E, F, and G constitute the peripheral sector of the complex.

The protein resides in the cell inner membrane. It carries out the reaction a quinone + NADH + 5 H(+)(in) = a quinol + NAD(+) + 4 H(+)(out). In terms of biological role, NDH-1 shuttles electrons from NADH, via FMN and iron-sulfur (Fe-S) centers, to quinones in the respiratory chain. The immediate electron acceptor for the enzyme in this species is believed to be ubiquinone. Couples the redox reaction to proton translocation (for every two electrons transferred, four hydrogen ions are translocated across the cytoplasmic membrane), and thus conserves the redox energy in a proton gradient. This Psychrobacter arcticus (strain DSM 17307 / VKM B-2377 / 273-4) protein is NADH-quinone oxidoreductase subunit C/D.